Consider the following 397-residue polypeptide: Succinyl-diaminopimelate desuccinylase (397 aa).

Residue His73 participates in Zn(2+) binding. Residue Asp75 is part of the active site. Asp106 provides a ligand contact to Zn(2+). Catalysis depends on Glu140, which acts as the Proton acceptor. Zn(2+) contacts are provided by Glu141, Glu169, and His366.

The protein belongs to the peptidase M20A family. DapE subfamily. Homodimer. Requires Zn(2+) as cofactor. Co(2+) serves as cofactor.

The enzyme catalyses N-succinyl-(2S,6S)-2,6-diaminopimelate + H2O = (2S,6S)-2,6-diaminopimelate + succinate. It functions in the pathway amino-acid biosynthesis; L-lysine biosynthesis via DAP pathway; LL-2,6-diaminopimelate from (S)-tetrahydrodipicolinate (succinylase route): step 3/3. In terms of biological role, catalyzes the hydrolysis of N-succinyl-L,L-diaminopimelic acid (SDAP), forming succinate and LL-2,6-diaminopimelate (DAP), an intermediate involved in the bacterial biosynthesis of lysine and meso-diaminopimelic acid, an essential component of bacterial cell walls. The polypeptide is Succinyl-diaminopimelate desuccinylase (Rhizobium meliloti (strain 1021) (Ensifer meliloti)).